Consider the following 111-residue polypeptide: MGGKTVTRADLAEAVYRKVGLSRTESAQIVEMVLQEVCDAIVRGETVKLSSFATFQVREKNERVGRNPKTGEEVPISPRRVMTFKASNVLKSRILRAHQTRKPSKEATASS.

It belongs to the bacterial histone-like protein family. Heterodimer of an alpha and a beta chain.

This protein is one of the two subunits of integration host factor, a specific DNA-binding protein that functions in genetic recombination as well as in transcriptional and translational control. The protein is Integration host factor subunit alpha of Chelativorans sp. (strain BNC1).